We begin with the raw amino-acid sequence, 126 residues long: MEVLEGLYYSKDHEWVKVEGDKAYIGITDYAQHSLGNIVYIELPEVGAELSAGDVLGVVESVKAASDVYTPVDGKVLEVNNAIVDDPSLVNNDPYGSWMALVELKDKSQLDNLMTAEEYKKFLDEE.

The region spanning 22–103 (KAYIGITDYA…PYGSWMALVE (82 aa)) is the Lipoyl-binding domain. N6-lipoyllysine is present on Lys-63.

It belongs to the GcvH family. In terms of assembly, the glycine cleavage system is composed of four proteins: P, T, L and H. (R)-lipoate is required as a cofactor.

In terms of biological role, the glycine cleavage system catalyzes the degradation of glycine. The H protein shuttles the methylamine group of glycine from the P protein to the T protein. The sequence is that of Glycine cleavage system H protein from Thermoanaerobacter sp. (strain X514).